Consider the following 306-residue polypeptide: D-alanine--D-alanine ligase (306 aa).

The region spanning 107–303 is the ATP-grasp domain; that stretch reads KHLFKSAGLS…FEQLVVRILE (197 aa). ATP is bound at residue 134–189; that stretch reads IMQQFKKVMVKPSHEGSSIGMAQASTPQELEDALSNAFKFDSQVLVEQWISGREFT. Residues Asp-257, Glu-270, and Asn-272 each contribute to the Mg(2+) site.

Belongs to the D-alanine--D-alanine ligase family. The cofactor is Mg(2+). It depends on Mn(2+) as a cofactor.

It localises to the cytoplasm. It carries out the reaction 2 D-alanine + ATP = D-alanyl-D-alanine + ADP + phosphate + H(+). Its pathway is cell wall biogenesis; peptidoglycan biosynthesis. Functionally, cell wall formation. This Pseudoalteromonas translucida (strain TAC 125) protein is D-alanine--D-alanine ligase.